The sequence spans 184 residues: Translation initiation factor IF-3 (184 aa).

It belongs to the IF-3 family. As to quaternary structure, monomer.

The protein localises to the cytoplasm. Functionally, IF-3 binds to the 30S ribosomal subunit and shifts the equilibrium between 70S ribosomes and their 50S and 30S subunits in favor of the free subunits, thus enhancing the availability of 30S subunits on which protein synthesis initiation begins. In Mycoplasma genitalium (strain ATCC 33530 / DSM 19775 / NCTC 10195 / G37) (Mycoplasmoides genitalium), this protein is Translation initiation factor IF-3.